We begin with the raw amino-acid sequence, 275 residues long: MPELPEVETVARSLAPQLLSRTIVGLAKLDWPRMLTPPPPEFAALVAGRRIEAVGRRAKWLLLTLDAGWTLAIHLRMSGHLLVAEPAAADAPHVHFALDLDDGRRLIFDDQRKFGRVHLLDSTGLLALDAAHGPEPLTDDFTPAVLAERLRNRQAPIKALLLDQRLIAGIGNIYANEALWLAGIHPLTPGGTLTVDQIAALHHAIRLVLADAIANQGSSLRNYRDGYGRRGNYQEHFNVYDRVGKPCPRCQTAIERIVVAQRSTFFCPLCQVLVQ.

Pro2 serves as the catalytic Schiff-base intermediate with DNA. The active-site Proton donor is Glu3. Lys59 (proton donor; for beta-elimination activity) is an active-site residue. DNA contacts are provided by His93, Arg112, and Arg153. Residues 238–272 form an FPG-type zinc finger; sequence NVYDRVGKPCPRCQTAIERIVVAQRSTFFCPLCQV. The Proton donor; for delta-elimination activity role is filled by Arg262.

It belongs to the FPG family. Monomer. Zn(2+) serves as cofactor.

It carries out the reaction Hydrolysis of DNA containing ring-opened 7-methylguanine residues, releasing 2,6-diamino-4-hydroxy-5-(N-methyl)formamidopyrimidine.. It catalyses the reaction 2'-deoxyribonucleotide-(2'-deoxyribose 5'-phosphate)-2'-deoxyribonucleotide-DNA = a 3'-end 2'-deoxyribonucleotide-(2,3-dehydro-2,3-deoxyribose 5'-phosphate)-DNA + a 5'-end 5'-phospho-2'-deoxyribonucleoside-DNA + H(+). Its function is as follows. Involved in base excision repair of DNA damaged by oxidation or by mutagenic agents. Acts as a DNA glycosylase that recognizes and removes damaged bases. Has a preference for oxidized purines, such as 7,8-dihydro-8-oxoguanine (8-oxoG). Has AP (apurinic/apyrimidinic) lyase activity and introduces nicks in the DNA strand. Cleaves the DNA backbone by beta-delta elimination to generate a single-strand break at the site of the removed base with both 3'- and 5'-phosphates. This is Formamidopyrimidine-DNA glycosylase from Chloroflexus aggregans (strain MD-66 / DSM 9485).